A 348-amino-acid polypeptide reads, in one-letter code: Rhodopsin (348 aa).

Residue Met-1 is modified to N-acetylmethionine. Residues Met-1–Gln-36 lie on the Extracellular side of the membrane. Asn-2 and Asn-15 each carry an N-linked (GlcNAc...) asparagine glycan. The chain crosses the membrane as a helical span at residues Phe-37–Val-61. The Cytoplasmic segment spans residues Thr-62–Asn-73. A helical membrane pass occupies residues Tyr-74–Tyr-96. Over Thr-97–Cys-110 the chain is Extracellular. An intrachain disulfide couples Cys-110 to Cys-187. The chain crosses the membrane as a helical span at residues Asn-111–Ile-133. A 'Ionic lock' involved in activated form stabilization motif is present at residues Glu-134–Tyr-136. Residues Glu-134–His-152 lie on the Cytoplasmic side of the membrane. Residues Ala-153 to Val-173 traverse the membrane as a helical segment. Residues Gly-174 to Ser-202 lie on the Extracellular side of the membrane. Zn(2+) is bound at residue Glu-201. The helical transmembrane segment at Phe-203–Gly-224 threads the bilayer. The Cytoplasmic portion of the chain corresponds to Gln-225 to Arg-252. A helical membrane pass occupies residues Met-253–Tyr-274. At Ile-275 to Ile-286 the chain is on the extracellular side. Gln-279 is a Zn(2+) binding site. Residues Phe-287–Met-308 form a helical membrane-spanning segment. Position 296 is an N6-(retinylidene)lysine (Lys-296). At Met-309–Ala-348 the chain is on the cytoplasmic side. S-palmitoyl cysteine attachment occurs at residues Cys-322 and Cys-323. Positions Asp-330–Ala-348 are interaction with SAG. Ser-334 carries the phosphoserine modification. Phosphothreonine occurs at positions 335 and 336. Ser-338 is subject to Phosphoserine. Phosphothreonine occurs at positions 340 and 342. Ser-343 carries the post-translational modification Phosphoserine.

Belongs to the G-protein coupled receptor 1 family. Opsin subfamily. As to quaternary structure, homodimer. May form a complex composed of RHO, GRK1 and RCVRN in a Ca(2+)-dependent manner; RCVRN prevents the interaction between GRK1 and RHO. Interacts with GRK1. Interacts (phosphorylated form) with SAG. Interacts with GNAT1. Interacts with GNAT3. SAG and G-proteins compete for a common binding site. Interacts with PRCD; the interaction promotes PRCD stability. Forms a complex with ASAP1 and ARF4. Forms a complex with ASAP1, RAB11A, Rabin8/RAB3IP, ARF4 and RAB11FIP3; the complex regulates Golgi-to-cilia rhodopsin/RHO transport in photoreceptors. In terms of processing, phosphorylated on some or all of the serine and threonine residues present in the C-terminal region. Contains one covalently linked retinal chromophore. Upon light absorption, the covalently bound 11-cis-retinal is converted to all-trans-retinal. After hydrolysis of the Schiff base and release of the covalently bound all-trans-retinal, active rhodopsin is regenerated by binding of a fresh molecule of 11-cis-retinal.

The protein resides in the membrane. Its subcellular location is the cell projection. It is found in the cilium. It localises to the photoreceptor outer segment. Functionally, photoreceptor required for image-forming vision at low light intensity. Required for photoreceptor cell viability after birth. Light-induced isomerization of 11-cis to all-trans retinal triggers a conformational change that activates signaling via G-proteins. Subsequent receptor phosphorylation mediates displacement of the bound G-protein alpha subunit by the arrestin SAG and terminates signaling. This is Rhodopsin (RHO) from Otolemur crassicaudatus (Brown greater galago).